Here is a 163-residue protein sequence, read N- to C-terminus: Shikimate kinase (163 aa).

Residue G10–T15 participates in ATP binding. T14 is a Mg(2+) binding site. Positions 28, 52, and 75 each coordinate substrate. R116 contributes to the ATP binding site. R134 lines the substrate pocket. Position 151 (R151) interacts with ATP.

It belongs to the shikimate kinase family. As to quaternary structure, monomer. Mg(2+) is required as a cofactor.

It is found in the cytoplasm. The enzyme catalyses shikimate + ATP = 3-phosphoshikimate + ADP + H(+). The protein operates within metabolic intermediate biosynthesis; chorismate biosynthesis; chorismate from D-erythrose 4-phosphate and phosphoenolpyruvate: step 5/7. Its function is as follows. Catalyzes the specific phosphorylation of the 3-hydroxyl group of shikimic acid using ATP as a cosubstrate. The chain is Shikimate kinase from Streptococcus pyogenes serotype M12 (strain MGAS2096).